Reading from the N-terminus, the 545-residue chain is Acetamidase (545 aa).

Residues K130 and S205 each act as charge relay system in the active site. S229 functions as the Acyl-ester intermediate in the catalytic mechanism.

This sequence belongs to the amidase family.

The catalysed reaction is a monocarboxylic acid amide + H2O = a monocarboxylate + NH4(+). It carries out the reaction acetamide + H2O = acetate + NH4(+). Allows acetamide to be used as a sole carbon or nitrogen source. The sequence is that of Acetamidase (amdS) from Aspergillus oryzae (strain ATCC 42149 / RIB 40) (Yellow koji mold).